The following is a 117-amino-acid chain: Large ribosomal subunit protein uL18 (117 aa).

It belongs to the universal ribosomal protein uL18 family. As to quaternary structure, part of the 50S ribosomal subunit; part of the 5S rRNA/L5/L18/L25 subcomplex. Contacts the 5S and 23S rRNAs.

Functionally, this is one of the proteins that bind and probably mediate the attachment of the 5S RNA into the large ribosomal subunit, where it forms part of the central protuberance. The protein is Large ribosomal subunit protein uL18 of Aliivibrio salmonicida (strain LFI1238) (Vibrio salmonicida (strain LFI1238)).